Here is an 86-residue protein sequence, read N- to C-terminus: Large ribosomal subunit protein bL27 (86 aa).

The interval 1–22 (MATKKAGGSSRNGRDSAGRRLG) is disordered.

This sequence belongs to the bacterial ribosomal protein bL27 family.

This chain is Large ribosomal subunit protein bL27, found in Rickettsia rickettsii (strain Iowa).